The chain runs to 584 residues: PE-PGRS family protein PE_PGRS11 (584 aa).

One can recognise a PE domain in the interval 1 to 92; that stretch reads MSFVIVARDA…AATSYAVTEV (92 aa). His-290 acts as the Tele-phosphohistidine intermediate in catalysis. The Proton donor/acceptor role is filled by Glu-365. The interval 384-584 is phosphoglycerate mutase; it reads YLVGPIAWTL…LPIGLPSLIP (201 aa).

It in the N-terminal section; belongs to the mycobacterial PE family. PGRS subfamily. The protein in the C-terminal section; belongs to the phosphoglycerate mutase family. Interacts with human TLR2. The cofactor is Mg(2+).

It is found in the secreted. The protein resides in the cell wall. Its subcellular location is the cell surface. It catalyses the reaction (2R)-2-phosphoglycerate = (2R)-3-phosphoglycerate. Induces maturation and activation of human dendritic cells (DCs), via TLR2-dependent activation of ERK1/2, p38 MAPK, and NF-kappa-B signaling pathways, and enhances the ability of DCs to stimulate CD4(+) T cells. By activating DCs, could potentially contribute to the initiation of innate immune responses during tuberculosis infection and hence regulate the clinical course of tuberculosis. Involved in resistance to oxidative stress, via TLR2-dependent activation of the PI3K-ERK1/2-NF-kappa-B signaling pathway and expression of COX-2 and Bcl2. Also abolishes H(2)O(2)-triggered activation of p38 MAPK. This Mycobacterium tuberculosis (strain ATCC 25618 / H37Rv) protein is PE-PGRS family protein PE_PGRS11.